We begin with the raw amino-acid sequence, 198 residues long: Na(+)-translocating NADH-quinone reductase subunit E (198 aa).

The next 6 membrane-spanning stretches (helical) occupy residues 11–31 (SVFIENMALSFFLGMCTFLAV), 35–55 (VSTAFGLGIAVIVVLGIAVPA), 77–97 (FLNFITFIGVIAALVQILEMI), 110–130 (GIFLPLITVNCAIFGGVSFMV), 140–160 (VVYGLGAGTGWMLAIVALAGL), and 176–196 (LGITFITVGLMALGFMSFSGI).

Belongs to the NqrDE/RnfAE family. In terms of assembly, composed of six subunits; NqrA, NqrB, NqrC, NqrD, NqrE and NqrF.

The protein resides in the cell inner membrane. The catalysed reaction is a ubiquinone + n Na(+)(in) + NADH + H(+) = a ubiquinol + n Na(+)(out) + NAD(+). Its function is as follows. NQR complex catalyzes the reduction of ubiquinone-1 to ubiquinol by two successive reactions, coupled with the transport of Na(+) ions from the cytoplasm to the periplasm. NqrA to NqrE are probably involved in the second step, the conversion of ubisemiquinone to ubiquinol. This chain is Na(+)-translocating NADH-quinone reductase subunit E, found in Actinobacillus pleuropneumoniae serotype 5b (strain L20).